The primary structure comprises 319 residues: Thioredoxin reductase (319 aa).

36–43 is a binding site for FAD; it reads TGTNKGGQ. Cysteines 136 and 139 form a disulfide. Residue 288–297 coordinates FAD; the sequence is DVIDHVYRQA.

The protein belongs to the class-II pyridine nucleotide-disulfide oxidoreductase family. Homodimer. Requires FAD as cofactor.

It is found in the cytoplasm. The catalysed reaction is [thioredoxin]-dithiol + NADP(+) = [thioredoxin]-disulfide + NADPH + H(+). The chain is Thioredoxin reductase (trxB) from Buchnera aphidicola subsp. Acyrthosiphon pisum (strain APS) (Acyrthosiphon pisum symbiotic bacterium).